The chain runs to 475 residues: Cytosolic non-specific dipeptidase (475 aa).

An N-acetylalanine modification is found at alanine 2. Position 9 is an N6-acetyllysine (lysine 9). Serine 58 carries the phosphoserine modification. Residue histidine 99 coordinates Mn(2+). Aspartate 101 is a catalytic residue. Aspartate 132 is a binding site for Mn(2+). Glutamate 166 serves as the catalytic Proton acceptor. Substrate contacts are provided by residues 166 to 167, aspartate 195, and histidine 228; that span reads EE. Residues glutamate 167 and aspartate 195 each contribute to the Mn(2+) site. Phosphoserine is present on serine 299. Residues threonine 330, arginine 343, serine 417, and histidine 445 each coordinate substrate. Histidine 445 contributes to the Mn(2+) binding site.

The protein belongs to the peptidase M20A family. Homodimer. It depends on Mn(2+) as a cofactor. Ubiquitously expressed with higher levels in kidney and liver (at protein level). Expressed in peripheral blood leukocytes. Expressed in gastric mucosa and down-regulated in gastric cancer mucosal tissues (at protein level). As to expression, broadly expressed in fetal tissues. Expressed in adult liver and placenta.

It is found in the cytoplasm. The enzyme catalyses Hydrolysis of dipeptides, preferentially hydrophobic dipeptides including prolyl amino acids.. It catalyses the reaction L-threonyl-L-threonine + H2O = 2 L-threonine. The catalysed reaction is L-threonyl-L-serine + H2O = L-threonine + L-serine. It carries out the reaction L-seryl-L-threonine + H2O = L-threonine + L-serine. The enzyme catalyses L-cysteinylglycine + H2O = L-cysteine + glycine. It catalyses the reaction L-alanyl-L-cysteine + H2O = L-cysteine + L-alanine. The catalysed reaction is (S)-lactate + L-phenylalanine = N-[(S)-lactoyl]-L-phenylalanine + H2O. Inhibited by p-hydroxymercurybenzoate. The inhibitory concentration 50% (IC(50)) is 13 uM. Inhibited by bestatin. The inhibitory concentration 50% (IC(50)) is 7 nM at pH 9.5. Functionally, catalyzes the peptide bond hydrolysis in dipeptides, displaying a non-redundant activity toward threonyl dipeptides. Mediates threonyl dipeptide catabolism in a tissue-specific way. Has high dipeptidase activity toward cysteinylglycine, an intermediate metabolite in glutathione metabolism. Metabolizes N-lactoyl-amino acids, both through hydrolysis to form lactic acid and amino acids, as well as through their formation by reverse proteolysis. Plays a role in the regulation of cell cycle arrest and apoptosis. In Homo sapiens (Human), this protein is Cytosolic non-specific dipeptidase.